We begin with the raw amino-acid sequence, 203 residues long: Probable nicotinate-nucleotide adenylyltransferase (203 aa).

The protein belongs to the NadD family.

It catalyses the reaction nicotinate beta-D-ribonucleotide + ATP + H(+) = deamido-NAD(+) + diphosphate. The protein operates within cofactor biosynthesis; NAD(+) biosynthesis; deamido-NAD(+) from nicotinate D-ribonucleotide: step 1/1. Its function is as follows. Catalyzes the reversible adenylation of nicotinate mononucleotide (NaMN) to nicotinic acid adenine dinucleotide (NaAD). This chain is Probable nicotinate-nucleotide adenylyltransferase, found in Clostridium kluyveri (strain ATCC 8527 / DSM 555 / NBRC 12016 / NCIMB 10680 / K1).